Here is a 422-residue protein sequence, read N- to C-terminus: Serine--tRNA ligase (422 aa).

An L-serine-binding site is contributed by 231-233 (TSE). 262–264 (RQE) is a binding site for ATP. Residue glutamate 285 coordinates L-serine. 349-352 (EISS) lines the ATP pocket. Position 384 (serine 384) interacts with L-serine.

It belongs to the class-II aminoacyl-tRNA synthetase family. Type-1 seryl-tRNA synthetase subfamily. As to quaternary structure, homodimer. The tRNA molecule binds across the dimer.

It is found in the cytoplasm. The catalysed reaction is tRNA(Ser) + L-serine + ATP = L-seryl-tRNA(Ser) + AMP + diphosphate + H(+). It catalyses the reaction tRNA(Sec) + L-serine + ATP = L-seryl-tRNA(Sec) + AMP + diphosphate + H(+). It participates in aminoacyl-tRNA biosynthesis; selenocysteinyl-tRNA(Sec) biosynthesis; L-seryl-tRNA(Sec) from L-serine and tRNA(Sec): step 1/1. Its function is as follows. Catalyzes the attachment of serine to tRNA(Ser). Is also able to aminoacylate tRNA(Sec) with serine, to form the misacylated tRNA L-seryl-tRNA(Sec), which will be further converted into selenocysteinyl-tRNA(Sec). In Mycoplasma mycoides subsp. mycoides SC (strain CCUG 32753 / NCTC 10114 / PG1), this protein is Serine--tRNA ligase.